Reading from the N-terminus, the 276-residue chain is Putative phosphoenolpyruvate synthase regulatory protein (276 aa).

156 to 163 (GVSRSGKT) contributes to the ADP binding site.

The protein belongs to the pyruvate, phosphate/water dikinase regulatory protein family. PSRP subfamily.

The enzyme catalyses [pyruvate, water dikinase] + ADP = [pyruvate, water dikinase]-phosphate + AMP + H(+). The catalysed reaction is [pyruvate, water dikinase]-phosphate + phosphate + H(+) = [pyruvate, water dikinase] + diphosphate. Functionally, bifunctional serine/threonine kinase and phosphorylase involved in the regulation of the phosphoenolpyruvate synthase (PEPS) by catalyzing its phosphorylation/dephosphorylation. The protein is Putative phosphoenolpyruvate synthase regulatory protein of Acidovorax ebreus (strain TPSY) (Diaphorobacter sp. (strain TPSY)).